The following is a 547-amino-acid chain: Chaperonin GroEL (547 aa).

ATP contacts are provided by residues 30–33 (TLGP), lysine 51, 87–91 (DGTTT), glycine 416, 480–482 (NAA), and aspartate 496.

The protein belongs to the chaperonin (HSP60) family. In terms of assembly, forms a cylinder of 14 subunits composed of two heptameric rings stacked back-to-back. Interacts with the co-chaperonin GroES.

The protein localises to the cytoplasm. The catalysed reaction is ATP + H2O + a folded polypeptide = ADP + phosphate + an unfolded polypeptide.. Its function is as follows. Together with its co-chaperonin GroES, plays an essential role in assisting protein folding. The GroEL-GroES system forms a nano-cage that allows encapsulation of the non-native substrate proteins and provides a physical environment optimized to promote and accelerate protein folding. This Pseudoalteromonas translucida (strain TAC 125) protein is Chaperonin GroEL.